We begin with the raw amino-acid sequence, 585 residues long: Poly(A) RNA polymerase, mitochondrial (585 aa).

The transit peptide at 1–37 (MAARGVGLLTRLPVCSQRRNRIPRSISRLLSCPGTIA) directs the protein to the mitochondrion. Position 90 is an N6-acetyllysine (K90). Residues 107–109 (YES) and 244–245 (GC) each bind ATP. Mg(2+)-binding residues include D246 and D248. A PAP-associated domain is found at 441-486 (ELLIKEFFEYFGNFAFNKNSINIRQGREQNKPDSSPLYIQNPFETS). Residues 537–585 (PGSGHTSLSRKKKKKPMSEKVKGLLASIKSNSPDSSTDTSGKRTISTQA) are disordered. Residues 564-585 (IKSNSPDSSTDTSGKRTISTQA) show a composition bias toward polar residues.

This sequence belongs to the DNA polymerase type-B-like family. As to quaternary structure, homodimer. Mg(2+) is required as a cofactor. The cofactor is Mn(2+).

The protein localises to the cytoplasm. It localises to the mitochondrion. It carries out the reaction RNA(n) + ATP = RNA(n)-3'-adenine ribonucleotide + diphosphate. Polymerase that creates the 3' poly(A) tail of mitochondrial transcripts. Can use all four nucleotides, but has higher activity with ATP and UTP (in vitro). Plays a role in replication-dependent histone mRNA degradation. May be involved in the terminal uridylation of mature histone mRNAs before their degradation is initiated. Might be responsible for the creation of some UAA stop codons which are not encoded in mtDNA. This is Poly(A) RNA polymerase, mitochondrial (Mtpap) from Mus musculus (Mouse).